Here is a 336-residue protein sequence, read N- to C-terminus: tRNA N6-adenosine threonylcarbamoyltransferase (336 aa).

Residues histidine 112 and histidine 116 each contribute to the Fe cation site. Substrate-binding positions include 136–140 (LVSGG), aspartate 169, glycine 182, and asparagine 276. Fe cation is bound at residue aspartate 304.

It belongs to the KAE1 / TsaD family. It depends on Fe(2+) as a cofactor.

It localises to the cytoplasm. It carries out the reaction L-threonylcarbamoyladenylate + adenosine(37) in tRNA = N(6)-L-threonylcarbamoyladenosine(37) in tRNA + AMP + H(+). Its function is as follows. Required for the formation of a threonylcarbamoyl group on adenosine at position 37 (t(6)A37) in tRNAs that read codons beginning with adenine. Is involved in the transfer of the threonylcarbamoyl moiety of threonylcarbamoyl-AMP (TC-AMP) to the N6 group of A37, together with TsaE and TsaB. TsaD likely plays a direct catalytic role in this reaction. In Francisella tularensis subsp. novicida (strain U112), this protein is tRNA N6-adenosine threonylcarbamoyltransferase.